We begin with the raw amino-acid sequence, 540 residues long: BTB/POZ domain-containing protein 6-A (540 aa).

The region spanning 138-208 is the BTB domain; sequence ADVHFIVGPP…MYSDEIELAP (71 aa).

In terms of assembly, interacts with cul3. Interacts (via BTB domain) with zbtb16/plzf. As to expression, expressed in the developing central nervous system.

Its subcellular location is the cytoplasm. The protein localises to the nucleus. In terms of biological role, adapter protein for the cul3 E3 ubiquitin-protein ligase complex. Promotes the export of zbtb16/plzf from the nucleus to the cytoplasm and targets zbtb16/plzf for ubiquitination and degradation. Up-regulates neurog1 expression and antagonizes zbtb16/plzf, to promote neurogenesis. This chain is BTB/POZ domain-containing protein 6-A (btbd6a), found in Danio rerio (Zebrafish).